A 336-amino-acid chain; its full sequence is MKTILAIETSCDETAVAIVNSDKQVLANEILSQVEHKKCGGVIPEIASRAHMKHLSGLIKSAMEKSNLNFCDLDAIAATSGPGLIGGLIIGTMMAKAIAHVTQKPFIAVNHLEAHALVVRLLYEVEFPFLVLLISGGHCQFLIAQDVGKYIKLGETLDDSLGEAFDKVAKTLGLSYPGGPLIEELAKKGDGMRFKLPRAMIKRSGCDLSFSGIKTAVKNLAREFVMSEQDVCDMCASFQECISDILLDRVRNAIGIAVSLNIKINDFVITGGVAANNFLKERLKKHIDLNVLSPPSNLCTDNAVMVGWTGIERLQRSYVDSLDFAPRPKWELEKYY.

Positions 111 and 115 each coordinate Fe cation. Substrate contacts are provided by residues 133-137, D166, G179, and N276; that span reads LISGG. Fe cation is bound at residue D301.

It belongs to the KAE1 / TsaD family. Requires Fe(2+) as cofactor.

The protein resides in the cytoplasm. It catalyses the reaction L-threonylcarbamoyladenylate + adenosine(37) in tRNA = N(6)-L-threonylcarbamoyladenosine(37) in tRNA + AMP + H(+). Required for the formation of a threonylcarbamoyl group on adenosine at position 37 (t(6)A37) in tRNAs that read codons beginning with adenine. Is involved in the transfer of the threonylcarbamoyl moiety of threonylcarbamoyl-AMP (TC-AMP) to the N6 group of A37, together with TsaE and TsaB. TsaD likely plays a direct catalytic role in this reaction. This chain is tRNA N6-adenosine threonylcarbamoyltransferase, found in Wolbachia pipientis subsp. Culex pipiens (strain wPip).